A 902-amino-acid chain; its full sequence is HTH-type transcriptional regulator MalT (902 aa).

39–46 (SPAGYGKT) serves as a coordination point for ATP. The region spanning 832–897 (ELVRTSPLTQ…EAIVTAENLL (66 aa)) is the HTH luxR-type domain. The H-T-H motif DNA-binding region spans 856–875 (NEQIAQELDVAGTTIKTHIR).

The protein belongs to the MalT family. Monomer in solution. Oligomerizes to an active state in the presence of the positive effectors ATP and maltotriose.

With respect to regulation, activated by ATP and maltotriose, which are both required for DNA binding. Its function is as follows. Positively regulates the transcription of the maltose regulon whose gene products are responsible for uptake and catabolism of malto-oligosaccharides. Specifically binds to the promoter region of its target genes, recognizing a short DNA motif called the MalT box. The sequence is that of HTH-type transcriptional regulator MalT from Vibrio campbellii (strain ATCC BAA-1116).